The primary structure comprises 156 residues: Small ribosomal subunit protein uS7 (156 aa).

It belongs to the universal ribosomal protein uS7 family. Part of the 30S ribosomal subunit. Contacts proteins S9 and S11.

One of the primary rRNA binding proteins, it binds directly to 16S rRNA where it nucleates assembly of the head domain of the 30S subunit. Is located at the subunit interface close to the decoding center, probably blocks exit of the E-site tRNA. The protein is Small ribosomal subunit protein uS7 of Alcanivorax borkumensis (strain ATCC 700651 / DSM 11573 / NCIMB 13689 / SK2).